The sequence spans 305 residues: Undecaprenyl-diphosphatase (305 aa).

The next 8 helical transmembrane spans lie at 18-38 (GVTE…PALV), 55-75 (YLAF…VFFW), 103-123 (WLIV…EQLF), 130-150 (PVPA…GEVL), 187-207 (GVLI…RSGI), 225-245 (FSFL…IPEL), 246-266 (FGPL…ASFV), and 284-304 (LTPF…WLAL).

It belongs to the UppP family.

The protein resides in the cell membrane. The enzyme catalyses di-trans,octa-cis-undecaprenyl diphosphate + H2O = di-trans,octa-cis-undecaprenyl phosphate + phosphate + H(+). Functionally, catalyzes the dephosphorylation of undecaprenyl diphosphate (UPP). Confers resistance to bacitracin. In Mycolicibacterium paratuberculosis (strain ATCC BAA-968 / K-10) (Mycobacterium paratuberculosis), this protein is Undecaprenyl-diphosphatase.